The following is a 654-amino-acid chain: MPTLLQHAQIDWDDQGRPHSRHYDDVYFAVNEGIEETKHVFLGQTRLAERFANLAPHACTVIGETGFGTGMNFFCAWQLFDQHAHSDARLHFVSVEKYPLDHADMARAVRLWPELAAYTEPLLEQYVAVHPGFQQFTFTGGRVTLTLLIGDVLEQLPQLDAQIDVWFLDGFAPAKNPDMWTPELFAQLARLSHPGTVLGTFTTTGWVRRSLVEAGFAMKKVPGIGKKWEVMSGAYVGPLPGPCAPWYARPAVTQGPREALVIGAGLAGSSSAASLARRGWQVTVLERHEAPAQEASGNPQGVLYLKLSAHGTALSQMILSGFGYTRRQLQRLQRGRDWDACGVLQLAFDSKEAERQGKLAAAFDPGLLHCLARAEAEAIAGVALPGGGLFYPEGGWVHPPALCQQQLQHPGIHLVTHQEVLELRKVDEQWQAWAGDQLLARAPVVVLAGAADVLRFEPCAQLPLKRIRGQITRLPATVSSQALRTVVCAEGYVAPPREGEHTLGASFDFHSEDLAPTVAEHQGNLALLDEISVDLAQRLAVAELDPEQLQGRAAFRCTSPDYLPIVGPIADAQAFAEAYAVLGRDARQVPDVPCPWLGGLYVNSGHGSRGLITAPLSGELVAAWVCGEPLPLPRAVAQACHPNRFGLRRLIRGK.

Positions 1 to 236 (MPTLLQHAQI…KWEVMSGAYV (236 aa)) are tRNA (mnm(5)s(2)U34)-methyltransferase. Positions 262–654 (IGAGLAGSSS…FGLRRLIRGK (393 aa)) are FAD-dependent cmnm(5)s(2)U34 oxidoreductase.

It in the N-terminal section; belongs to the methyltransferase superfamily. tRNA (mnm(5)s(2)U34)-methyltransferase family. This sequence in the C-terminal section; belongs to the DAO family. The cofactor is FAD.

It is found in the cytoplasm. It catalyses the reaction 5-aminomethyl-2-thiouridine(34) in tRNA + S-adenosyl-L-methionine = 5-methylaminomethyl-2-thiouridine(34) in tRNA + S-adenosyl-L-homocysteine + H(+). Its function is as follows. Catalyzes the last two steps in the biosynthesis of 5-methylaminomethyl-2-thiouridine (mnm(5)s(2)U) at the wobble position (U34) in tRNA. Catalyzes the FAD-dependent demodification of cmnm(5)s(2)U34 to nm(5)s(2)U34, followed by the transfer of a methyl group from S-adenosyl-L-methionine to nm(5)s(2)U34, to form mnm(5)s(2)U34. This Pseudomonas putida (strain ATCC 47054 / DSM 6125 / CFBP 8728 / NCIMB 11950 / KT2440) protein is tRNA 5-methylaminomethyl-2-thiouridine biosynthesis bifunctional protein MnmC.